The sequence spans 36 residues: HSEGTFSNDYSKYLEDRKAQDFVRWLMNNKRSGAAE.

It belongs to the glucagon family.

The protein resides in the secreted. Its function is as follows. Promotes hydrolysis of glycogen and lipids, and raises the blood sugar level. In Oreochromis niloticus (Nile tilapia), this protein is Glucagon-1 (gcg1).